The chain runs to 158 residues: NAD(P)H-quinone oxidoreductase subunit J, chloroplastic (158 aa).

Belongs to the complex I 30 kDa subunit family. In terms of assembly, NDH is composed of at least 16 different subunits, 5 of which are encoded in the nucleus.

Its subcellular location is the plastid. The protein localises to the chloroplast thylakoid membrane. It catalyses the reaction a plastoquinone + NADH + (n+1) H(+)(in) = a plastoquinol + NAD(+) + n H(+)(out). The catalysed reaction is a plastoquinone + NADPH + (n+1) H(+)(in) = a plastoquinol + NADP(+) + n H(+)(out). Functionally, NDH shuttles electrons from NAD(P)H:plastoquinone, via FMN and iron-sulfur (Fe-S) centers, to quinones in the photosynthetic chain and possibly in a chloroplast respiratory chain. The immediate electron acceptor for the enzyme in this species is believed to be plastoquinone. Couples the redox reaction to proton translocation, and thus conserves the redox energy in a proton gradient. The protein is NAD(P)H-quinone oxidoreductase subunit J, chloroplastic of Psilotum nudum (Whisk fern).